The chain runs to 1166 residues: Serine/threonine-protein kinase BRI1-like 1 (1166 aa).

Residues 1–21 (MKQRWLLVLILCFFTTSLVMG) form the signal peptide. Over 22-776 (IHGKHLINDD…IHAKKQTVAT (755 aa)) the chain is Extracellular. Asn33 carries N-linked (GlcNAc...) asparagine glycosylation. The Cys pair 1 motif lies at 66–73 (CSWRGVSC). LRR repeat units follow at residues 78–99 (RIVG…VNLT), 103–124 (NLQN…SGSD), 126–147 (YLQV…DYVF), 152–173 (NLVS…APSS), 176–197 (SLTT…SFIS), 202–224 (SLKY…SFGI), 227–248 (NLTF…ITLP), 252–274 (FLET…EYWG), 278–300 (NLKQ…LSLL), 303–325 (TLVI…FTAC), 327–349 (WLQN…VVSK), 352–375 (GITY…TNCS), 376–397 (NLRV…GFCS), 403–424 (VLEK…ELGK), 427–449 (SLKT…IWML), 451–473 (NLSD…VCVK), 476–498 (NLET…ISRC), 500–522 (NMIW…IGNL), 524–547 (KLAI…GNCK), and 548–570 (SLIW…LASQ). Residue Asn97 is glycosylated (N-linked (GlcNAc...) asparagine). A glycan (N-linked (GlcNAc...) asparagine) is linked at Asn157. Asn212, Asn227, Asn237, and Asn257 each carry an N-linked (GlcNAc...) asparagine glycan. Residues Asn362 and Asn373 are each glycosylated (N-linked (GlcNAc...) asparagine). N-linked (GlcNAc...) asparagine glycans are attached at residues Asn451 and Asn461. N-linked (GlcNAc...) asparagine glycosylation is found at Asn521, Asn532, Asn558, and Asn638. LRR repeat units lie at residues 664-686 (YLQV…FGGL), 688-710 (AIGV…LGSL), and 712-734 (FLSD…GQLT). N-linked (GlcNAc...) asparagine glycosylation is found at Asn722 and Asn743. The short motif at 748–755 (CGVPLRPC) is the Cys pair 2 element. A helical transmembrane segment spans residues 777-797 (AVIAGIAFSFMCFVMLVMALY). At 798 to 1166 (RVRKVQKKEQ…LVEESRDKEP (369 aa)) the chain is on the cytoplasmic side. 2 positions are modified to phosphothreonine: Thr848 and Thr856. Positions 859-1147 (FSAETMVGSG…KADTEEDESL (289 aa)) constitute a Protein kinase domain. Residues 865 to 873 (VGSGGFGEV) and Lys887 each bind ATP. Tyr932 carries the phosphotyrosine modification. Asp987 (proton acceptor) is an active-site residue. Ser1022 carries the post-translational modification Phosphoserine. Residue Tyr1030 is modified to Phosphotyrosine. At Thr1141 the chain carries Phosphothreonine. A disordered region spans residues 1142 to 1166 (EEDESLDEFSLKETPLVEESRDKEP).

Belongs to the protein kinase superfamily. Ser/Thr protein kinase family. Predominantly expressed in vascular tissues. From 7 day old seedlings, it is expressed in the columella cells of the root tip, in the vascular initials in the meristematic region of the root and in vascular tissues. After germination, it is expressed in the stele cell and in the early differentiation zone of the root, where the expression continues from the root to the hypocotyls and cotyledons following the midvein. In mature plants, it is expressed in the vasculature of the leaf, predominantly in the midvein, and in the vascular bundles of inflorescence stems. Localizes to procambial cells of the vascular bundles located between the differentiating xylem and the phloem.

It is found in the cell membrane. It catalyses the reaction L-seryl-[protein] + ATP = O-phospho-L-seryl-[protein] + ADP + H(+). It carries out the reaction L-threonyl-[protein] + ATP = O-phospho-L-threonyl-[protein] + ADP + H(+). Functionally, receptor with a serine/threonine-protein kinase activity. Regulates, in response to brassinosteroid binding, a signaling cascade involved in plant development. Binds brassinolide. May be involved in cell growth and vascular differentiation. The polypeptide is Serine/threonine-protein kinase BRI1-like 1 (BRL1) (Arabidopsis thaliana (Mouse-ear cress)).